The primary structure comprises 138 residues: Nucleoside diphosphate kinase (138 aa).

6 residues coordinate ATP: K11, F59, R87, T93, R104, and N114. Catalysis depends on H117, which acts as the Pros-phosphohistidine intermediate.

It belongs to the NDK family. Mg(2+) serves as cofactor.

It is found in the cytoplasm. It catalyses the reaction a 2'-deoxyribonucleoside 5'-diphosphate + ATP = a 2'-deoxyribonucleoside 5'-triphosphate + ADP. It carries out the reaction a ribonucleoside 5'-diphosphate + ATP = a ribonucleoside 5'-triphosphate + ADP. In terms of biological role, major role in the synthesis of nucleoside triphosphates other than ATP. The ATP gamma phosphate is transferred to the NDP beta phosphate via a ping-pong mechanism, using a phosphorylated active-site intermediate. This is Nucleoside diphosphate kinase from Saccharolobus islandicus (strain Y.N.15.51 / Yellowstone #2) (Sulfolobus islandicus).